The following is a 310-amino-acid chain: Ribose-phosphate pyrophosphokinase (310 aa).

ATP contacts are provided by residues 34–36 (DME) and 93–94 (RQ). The Mg(2+) site is built by histidine 127 and aspartate 167. The active site involves lysine 190. D-ribose 5-phosphate contacts are provided by residues arginine 192, aspartate 216, and 220 to 224 (DSGGT).

It belongs to the ribose-phosphate pyrophosphokinase family. Class I subfamily. In terms of assembly, homohexamer. It depends on Mg(2+) as a cofactor.

The protein localises to the cytoplasm. The catalysed reaction is D-ribose 5-phosphate + ATP = 5-phospho-alpha-D-ribose 1-diphosphate + AMP + H(+). Its pathway is metabolic intermediate biosynthesis; 5-phospho-alpha-D-ribose 1-diphosphate biosynthesis; 5-phospho-alpha-D-ribose 1-diphosphate from D-ribose 5-phosphate (route I): step 1/1. Functionally, involved in the biosynthesis of the central metabolite phospho-alpha-D-ribosyl-1-pyrophosphate (PRPP) via the transfer of pyrophosphoryl group from ATP to 1-hydroxyl of ribose-5-phosphate (Rib-5-P). The protein is Ribose-phosphate pyrophosphokinase of Granulibacter bethesdensis (strain ATCC BAA-1260 / CGDNIH1).